The following is a 355-amino-acid chain: Phosphoribosylformylglycinamidine cyclo-ligase (355 aa).

It belongs to the AIR synthase family.

It is found in the cytoplasm. The catalysed reaction is 2-formamido-N(1)-(5-O-phospho-beta-D-ribosyl)acetamidine + ATP = 5-amino-1-(5-phospho-beta-D-ribosyl)imidazole + ADP + phosphate + H(+). The protein operates within purine metabolism; IMP biosynthesis via de novo pathway; 5-amino-1-(5-phospho-D-ribosyl)imidazole from N(2)-formyl-N(1)-(5-phospho-D-ribosyl)glycinamide: step 2/2. This chain is Phosphoribosylformylglycinamidine cyclo-ligase, found in Beijerinckia indica subsp. indica (strain ATCC 9039 / DSM 1715 / NCIMB 8712).